The primary structure comprises 286 residues: Inositol polyphosphate multikinase alpha (286 aa).

The segment at 1 to 22 is disordered; the sequence is MQLKVPEHQVAGHIAKDGKPGP.

It belongs to the inositol phosphokinase (IPK) family. Post-translationally, phosphorylated. As to expression, detected in leaves, stems, roots, siliques and flowers. Highly expressed in root tissues, anthers, the stigma, pollen grains and growing pollen tubes.

The protein resides in the nucleus. It is found in the cell membrane. It carries out the reaction 1D-myo-inositol 1,4,5-trisphosphate + 2 ATP = 1D-myo-inositol 1,3,4,5,6-pentakisphosphate + 2 ADP + 2 H(+). The catalysed reaction is 1D-myo-inositol 1,3,4,6-tetrakisphosphate + ATP = 1D-myo-inositol 1,3,4,5,6-pentakisphosphate + ADP + H(+). In terms of biological role, inositol phosphate kinase with a broad substrate specificity. Phosphorylates inositol 1,4,5-trisphosphate (Ins(1,4,5)P3), inositol 1,4,5,6-tetrakisphosphate (Ins(1,4,5,6)P4), inositol 1,3,4,5-tetrakisphosphate (Ins(1,3,4,5)P4), inositol 1,3,4,6-tetrakisphosphate (Ins(1,3,4,6)P4) and inositol 1,2,3,4,6-pentakisphosphate (Ins(1,2,3,4,6)P5) but not inositol 1,4-bisphosphate (Ins(1,4)P2), inositol 1,3,4-trisphosphate (Ins(1,3,4)P3), inositol 1,2,6-trisphosphate (Ins(1,2,6)P3), inositol 3,4,5,6-tetrakisphosphate (Ins(3,4,5,6)P4), inositol 1,3,4,5,6-pentakisphosphate (Ins(1,3,4,5,6)P5), inositol 1,2,4,5,6-pentakisphosphate (Ins(1,2,4,5,6)P5) or inositol hexakisphosphate (InsP6). Regulates pollen and root development probably through the regulation of InsP3-mediated calcium accumulation. The chain is Inositol polyphosphate multikinase alpha (IPK2a) from Arabidopsis thaliana (Mouse-ear cress).